Consider the following 150-residue polypeptide: Large ribosomal subunit protein bL9 (150 aa).

Belongs to the bacterial ribosomal protein bL9 family.

Functionally, binds to the 23S rRNA. This chain is Large ribosomal subunit protein bL9, found in Aromatoleum aromaticum (strain DSM 19018 / LMG 30748 / EbN1) (Azoarcus sp. (strain EbN1)).